The chain runs to 401 residues: Inactive leucine-rich repeat receptor-like protein kinase CORYNE (401 aa).

Positions 1 to 33 (MKQRRRRNGCSSSNTISLLLLFFLVFFSRTSTS) are cleaved as a signal peptide. Residues 34-62 (TSCRRRTVKHLSTTSTSSTPLESRITSKV) are Extracellular-facing. A helical transmembrane segment spans residues 63-83 (IVISIVSGILTGLVSALVLAF). Topologically, residues 84-401 (LVRSIVKFMK…VHMLTQLHSF (318 aa)) are cytoplasmic. One can recognise a Protein kinase domain in the interval 118 to 401 (SNGIQLLGSD…VHMLTQLHSF (284 aa)). ATP is bound by residues 124-132 (LGSDLNGKY) and Lys-146.

This sequence belongs to the protein kinase superfamily. Ser/Thr protein kinase family. Self-interacts. Parts of a tetrameric complex made of two CLV2/CRN heterodimers that can interact with CLV3 and CLE peptides. CLV2/CRN heterodimer interacts with CLV1 homodimers. Interacts with CLV1 and CLV2. CLV2/CRN heterodimer can interact with BAM3. In terms of tissue distribution, present in roots, stems, leaves, inflorescence, flowers and siliques. Mostly expressed in shoot tips and, to a lesser extent, in young organs and roots. Also expressed in the inner tissues of the proximal root meristem. Expressed in the vascular cylinder of root tips, mostly in phloem poles.

It localises to the cell membrane. Its subcellular location is the endoplasmic reticulum membrane. Involved in the perception of CLV3 and CLV3-like (CLE) peptides, that act as extracellular signals regulating meristem maintenance. Modulates root, shoot and flower apical meristem maintenance and floral organ development regulation, probably via CLAVATA (CLV)-like pathways involving at least CLV3 and CLE19. In complex with CLV2, perceives secreted CLV3-like effector proteins from plant-parasitic cyst nematodes as ligand mimics of the plant CLE signaling pathway. This recognition is required for proper feeding structure (syncytium) development and ultimately successful nematode infection. CLE14 perception by CLV2/CRN complex triggers root meristem differentiation. Required for the sensing of the root CLE peptides (e.g. CLE8, CLE9/CLE10, CLE11, CLE13, CLE14, CLE16, CLE17, CLE18, CLE20, CLE21, CLE25, CLE26, CLE40, CLE41/CLE44 and CLE45), which also involves CLV2 and leads to root growth regulation, mostly in the phloem and protophloem. Promotes the accumulation of BAM3, especially at later stages of protophloem development. The chain is Inactive leucine-rich repeat receptor-like protein kinase CORYNE from Arabidopsis thaliana (Mouse-ear cress).